We begin with the raw amino-acid sequence, 394 residues long: 1-deoxy-D-xylulose 5-phosphate reductoisomerase (394 aa).

T12, G13, S14, I15, G38, N41, and N132 together coordinate NADPH. K133 serves as a coordination point for 1-deoxy-D-xylulose 5-phosphate. E134 is an NADPH binding site. Residue D156 coordinates Mn(2+). S157, E158, S182, and H205 together coordinate 1-deoxy-D-xylulose 5-phosphate. Residue E158 coordinates Mn(2+). Position 211 (G211) interacts with NADPH. S218, N223, K224, and E227 together coordinate 1-deoxy-D-xylulose 5-phosphate. Residue E227 coordinates Mn(2+).

The protein belongs to the DXR family. Mg(2+) is required as a cofactor. Mn(2+) serves as cofactor.

The enzyme catalyses 2-C-methyl-D-erythritol 4-phosphate + NADP(+) = 1-deoxy-D-xylulose 5-phosphate + NADPH + H(+). It functions in the pathway isoprenoid biosynthesis; isopentenyl diphosphate biosynthesis via DXP pathway; isopentenyl diphosphate from 1-deoxy-D-xylulose 5-phosphate: step 1/6. Functionally, catalyzes the NADPH-dependent rearrangement and reduction of 1-deoxy-D-xylulose-5-phosphate (DXP) to 2-C-methyl-D-erythritol 4-phosphate (MEP). The protein is 1-deoxy-D-xylulose 5-phosphate reductoisomerase of Paenarthrobacter aurescens (strain TC1).